We begin with the raw amino-acid sequence, 321 residues long: Ornithine carbamoyltransferase (321 aa).

Residues 53–56, glutamine 80, arginine 104, and 131–134 each bind carbamoyl phosphate; these read STRT and HPCQ. L-ornithine-binding positions include asparagine 166, aspartate 230, and 234 to 235; that span reads SM. Carbamoyl phosphate is bound by residues 270-271 and arginine 298; that span reads CL.

It belongs to the aspartate/ornithine carbamoyltransferase superfamily. OTCase family.

The protein localises to the cytoplasm. It carries out the reaction carbamoyl phosphate + L-ornithine = L-citrulline + phosphate + H(+). The protein operates within amino-acid biosynthesis; L-arginine biosynthesis; L-arginine from L-ornithine and carbamoyl phosphate: step 1/3. Reversibly catalyzes the transfer of the carbamoyl group from carbamoyl phosphate (CP) to the N(epsilon) atom of ornithine (ORN) to produce L-citrulline. This Bifidobacterium longum (strain NCC 2705) protein is Ornithine carbamoyltransferase.